A 249-amino-acid chain; its full sequence is 2,3-bisphosphoglycerate-dependent phosphoglycerate mutase 2 (249 aa).

Substrate is bound by residues 8 to 15 (RHGESIWN), 21 to 22 (TG), Arg-60, 87 to 90 (ERHY), Lys-98, 114 to 115 (RR), and 183 to 184 (GN). His-9 acts as the Tele-phosphohistidine intermediate in catalysis. Glu-87 functions as the Proton donor/acceptor in the catalytic mechanism.

Belongs to the phosphoglycerate mutase family. BPG-dependent PGAM subfamily. Homodimer.

It carries out the reaction (2R)-2-phosphoglycerate = (2R)-3-phosphoglycerate. The protein operates within carbohydrate degradation; glycolysis; pyruvate from D-glyceraldehyde 3-phosphate: step 3/5. In terms of biological role, catalyzes the interconversion of 2-phosphoglycerate and 3-phosphoglycerate. The protein is 2,3-bisphosphoglycerate-dependent phosphoglycerate mutase 2 of Nitrosomonas europaea (strain ATCC 19718 / CIP 103999 / KCTC 2705 / NBRC 14298).